A 153-amino-acid chain; its full sequence is Endoribonuclease YbeY (153 aa).

3 residues coordinate Zn(2+): histidine 116, histidine 120, and histidine 126.

It belongs to the endoribonuclease YbeY family. The cofactor is Zn(2+).

The protein resides in the cytoplasm. In terms of biological role, single strand-specific metallo-endoribonuclease involved in late-stage 70S ribosome quality control and in maturation of the 3' terminus of the 16S rRNA. The chain is Endoribonuclease YbeY from Leifsonia xyli subsp. xyli (strain CTCB07).